A 392-amino-acid polypeptide reads, in one-letter code: MASHKLLVTPPKALLKPLSIPNQLLLGPGPSNLPPRIMAAGGLQMIGSMSKDMYQIMDEIKEGIQYVFQTRNPLTLVISGSGHCALEAALVNVLEPGDSFLVGANGIWGQRAVDIGERIGARVHPMTKDPGGHYTLQEVEEGLAQHKPVLLFLTHGESSTGVLQPLDGFGELCHRYKCLLLVDSVASLGGTPLYMDRQGIDILYSGSQKALNAPPGTSLISFSDKAKKKMYSRKTKPFSFYLDIKWLANFWGCDDQPRMYHHTIPVISLYSLRESLALIAEQGLENSWRQHREAAAYLHGRLQALGLQLFVKDPALRLPTVTTVAVPAGYDWRDIVSYVIDHFDIEIMGGLGPSTGKVLRIGLLGCNATRENVDRVTEALRAALQHCPKKKL.

A Phosphothreonine modification is found at Thr-9. Lys-209 carries the N6-(pyridoxal phosphate)lysine modification. Lys-225 is modified (N6-acetyllysine; alternate). N6-succinyllysine; alternate is present on Lys-225. N6-acetyllysine occurs at positions 234 and 312. A substrate-binding site is contributed by Arg-360.

The protein belongs to the class-V pyridoxal-phosphate-dependent aminotransferase family. Homodimer. It depends on pyridoxal 5'-phosphate as a cofactor. In terms of tissue distribution, liver.

It is found in the peroxisome. It carries out the reaction L-serine + pyruvate = 3-hydroxypyruvate + L-alanine. The catalysed reaction is glyoxylate + L-alanine = glycine + pyruvate. Its activity is regulated as follows. Alanine--glyoxylate aminotransferase activity is inhibited by 1 mM (aminooxy)acetic acid by 97.5%. In terms of biological role, peroxisomal aminotransferase that catalyzes the transamination of glyoxylate to glycine and contributes to the glyoxylate detoxification. Also catalyzes the transamination between L-serine and pyruvate and contributes to gluconeogenesis from the L-serine metabolism. This chain is Alanine--glyoxylate aminotransferase, found in Homo sapiens (Human).